The primary structure comprises 1136 residues: Unconventional myosin-Ib (1136 aa).

Residues 15–701 form the Myosin motor domain; sequence IGVGDTVLLE…TLFQLEDLRK (687 aa). S60 is modified (phosphoserine). 108–115 is a binding site for ATP; the sequence is GESGAGKT. Residue K287 forms a Glycyl lysine isopeptide (Lys-Gly) (interchain with G-Cter in SUMO1); alternate linkage. K287 is covalently cross-linked (Glycyl lysine isopeptide (Lys-Gly) (interchain with G-Cter in SUMO2); alternate). The interval 592 to 599 is actin-binding; it reads YIRCIKPN. IQ domains are found at residues 704 to 729, 730 to 750, 750 to 778, 780 to 807, 808 to 837, and 837 to 866; these read LEDLATLIQKIYRGWKCRTHFLLMKR, SQVVIAAWYRRYAQQKRYQQI, IKSSALVIQSYIRGWKARKILRELKHQKR, KEAATTIAAYWHGTQARKERRRLKDEAR, NKHAIAVIWAFWLGSKARRELKRLKEEARR, and RKHAVAVIWAYWLGLKVRREYRKFFRANAG. The region spanning 952 to 1136 is the TH1 domain; sequence KALYPSSVGQ…NNRLLEVAVP (185 aa).

It belongs to the TRAFAC class myosin-kinesin ATPase superfamily. Myosin family.

Its function is as follows. Motor protein that may participate in process critical to neuronal development and function such as cell migration, neurite outgrowth and vesicular transport. This chain is Unconventional myosin-Ib (Myo1b), found in Rattus norvegicus (Rat).